The following is a 383-amino-acid chain: ATP phosphoribosyltransferase regulatory subunit (383 aa).

Belongs to the class-II aminoacyl-tRNA synthetase family. HisZ subfamily. Heteromultimer composed of HisG and HisZ subunits.

It localises to the cytoplasm. Its pathway is amino-acid biosynthesis; L-histidine biosynthesis; L-histidine from 5-phospho-alpha-D-ribose 1-diphosphate: step 1/9. Its function is as follows. Required for the first step of histidine biosynthesis. May allow the feedback regulation of ATP phosphoribosyltransferase activity by histidine. This Janthinobacterium sp. (strain Marseille) (Minibacterium massiliensis) protein is ATP phosphoribosyltransferase regulatory subunit.